The primary structure comprises 678 residues: Proprotein convertase subtilisin/kexin type 4 (678 aa).

Positions 1 to 26 (MRPSQTALWLGLVLSLALLAVGWASA) are cleaved as a signal peptide. The propeptide occupies 27–110 (RPPIYVSSWA…QQTLRRRVKR (84 aa)). In terms of domain architecture, Peptidase S8 spans 123 to 437 (QWYMNKEIEQ…YGLLDAGLLV (315 aa)). Residues Asp-155, His-196, and Ser-370 each act as charge relay system in the active site. A P/Homo B domain is found at 446–580 (TKPQKKCTIR…TLLLYGTAED (135 aa)). The N-linked (GlcNAc...) asparagine glycan is linked to Asn-472.

This sequence belongs to the peptidase S8 family. Furin subfamily. The proPCSK4 form interacts with HSPA5; the interaction takes place at the endoplasmic reticulum. In terms of processing, N-glycosylated. Post-translationally, synthesized in the endoplasmic reticulum as a zymogen, is matured by autocatalytic cleavage between the prodomain and the catalytic domain. As to expression, expressed abundantly in the testis. High levels seen in germ cells but not in Leydig, Sertoli or peritubular cells. Expressed in the pachytene spermatocytes and the round spermatids but not in the elongating spermatids. May be expressed within hormonally stimulated ovaries.

The protein localises to the cytoplasmic vesicle. The protein resides in the secretory vesicle. It is found in the acrosome membrane. Its function is as follows. Proprotein convertase involved in the processing of hormone and other protein precursors at sites comprised of pairs of basic amino acid residues. In males, important for ADAM2 processing as well as other acrosomal proteins with roles in fertilization and critical for normal fertilization events such as sperm capacitation, acrosome reaction and binding of sperm to zona pellucida. Plays also a role in female fertility, involved in the regulation of trophoblast migration and placental development, may be through the proteolytical processing and activation of proteins such as IGF2. May also participate in folliculogenesis in the ovaries. In Rattus norvegicus (Rat), this protein is Proprotein convertase subtilisin/kexin type 4 (Pcsk4).